The sequence spans 364 residues: Aminomethyltransferase (364 aa).

Belongs to the GcvT family. As to quaternary structure, the glycine cleavage system is composed of four proteins: P, T, L and H.

The catalysed reaction is N(6)-[(R)-S(8)-aminomethyldihydrolipoyl]-L-lysyl-[protein] + (6S)-5,6,7,8-tetrahydrofolate = N(6)-[(R)-dihydrolipoyl]-L-lysyl-[protein] + (6R)-5,10-methylene-5,6,7,8-tetrahydrofolate + NH4(+). Functionally, the glycine cleavage system catalyzes the degradation of glycine. This Shewanella oneidensis (strain ATCC 700550 / JCM 31522 / CIP 106686 / LMG 19005 / NCIMB 14063 / MR-1) protein is Aminomethyltransferase.